The following is a 141-amino-acid chain: Hemoglobin subunit alpha (141 aa).

The Globin domain occupies 1 to 141 (VLSSADKANI…VSTVLTSKYR (141 aa)). Phosphoserine is present on S3. N6-succinyllysine is present on residues K7 and K11. K16 is subject to N6-acetyllysine; alternate. K16 carries the post-translational modification N6-succinyllysine; alternate. The residue at position 24 (Y24) is a Phosphotyrosine. At K40 the chain carries N6-succinyllysine. Position 49 is a phosphoserine (S49). H58 is a binding site for O2. Residue H87 coordinates heme b. At S102 the chain carries Phosphoserine. T108 is subject to Phosphothreonine. A phosphoserine mark is found at S124 and S131. 2 positions are modified to phosphothreonine: T134 and T137. Phosphoserine is present on S138.

It belongs to the globin family. In terms of assembly, heterotetramer of two alpha chains and two beta chains. In terms of tissue distribution, red blood cells.

Its function is as follows. Involved in oxygen transport from the lung to the various peripheral tissues. Hemopressin acts as an antagonist peptide of the cannabinoid receptor CNR1. Hemopressin-binding efficiently blocks cannabinoid receptor CNR1 and subsequent signaling. This is Hemoglobin subunit alpha (HBA) from Proteles cristata (Aardwolf).